Consider the following 378-residue polypeptide: Acetylornithine deacetylase (378 aa).

H76 contacts Zn(2+). Residue D78 is part of the active site. D108 is a Zn(2+) binding site. E140 is an active-site residue. E141, E165, and H351 together coordinate Zn(2+).

It belongs to the peptidase M20A family. ArgE subfamily. As to quaternary structure, homodimer. Zn(2+) serves as cofactor. Requires Co(2+) as cofactor. The cofactor is glutathione.

The protein resides in the cytoplasm. The catalysed reaction is N(2)-acetyl-L-ornithine + H2O = L-ornithine + acetate. It functions in the pathway amino-acid biosynthesis; L-arginine biosynthesis; L-ornithine from N(2)-acetyl-L-ornithine (linear): step 1/1. Its function is as follows. Catalyzes the hydrolysis of the amide bond of N(2)-acetylated L-amino acids. Cleaves the acetyl group from N-acetyl-L-ornithine to form L-ornithine, an intermediate in L-arginine biosynthesis pathway, and a branchpoint in the synthesis of polyamines. The chain is Acetylornithine deacetylase from Vibrio campbellii (strain ATCC BAA-1116).